A 323-amino-acid polypeptide reads, in one-letter code: tRNA-modifying protein YgfZ (323 aa).

Residues Trp-29 and Trp-182 each contribute to the folate site.

The protein belongs to the tRNA-modifying YgfZ family.

The protein resides in the cytoplasm. Functionally, folate-binding protein involved in regulating the level of ATP-DnaA and in the modification of some tRNAs. It is probably a key factor in regulatory networks that act via tRNA modification, such as initiation of chromosomal replication. The protein is tRNA-modifying protein YgfZ of Vibrio atlanticus (strain LGP32) (Vibrio splendidus (strain Mel32)).